Consider the following 704-residue polypeptide: Ion-translocating oxidoreductase complex subunit C (704 aa).

2 4Fe-4S ferredoxin-type domains span residues 368–397 (MGAPQEEKSCIRCSACADACPADLLPQQLY) and 407–436 (KATAHHIADCIECGACAWVCPSNIPLVQYF). Cysteine 377, cysteine 380, cysteine 383, cysteine 387, cysteine 416, cysteine 419, cysteine 422, and cysteine 426 together coordinate [4Fe-4S] cluster. Positions 535–684 (ARAKQAAHPM…PADPRKAAVA (150 aa)) are disordered. Residues 556 to 565 (KAAVEAAIAR) show a composition bias toward low complexity.

This sequence belongs to the 4Fe4S bacterial-type ferredoxin family. RnfC subfamily. In terms of assembly, the complex is composed of six subunits: RsxA, RsxB, RsxC, RsxD, RsxE and RsxG. Requires [4Fe-4S] cluster as cofactor.

The protein resides in the cell inner membrane. Functionally, part of a membrane-bound complex that couples electron transfer with translocation of ions across the membrane. Required to maintain the reduced state of SoxR. This is Ion-translocating oxidoreductase complex subunit C from Salmonella paratyphi C (strain RKS4594).